A 236-amino-acid polypeptide reads, in one-letter code: Orotidine 5'-phosphate decarboxylase (236 aa).

Substrate contacts are provided by residues aspartate 14, lysine 36, 63–72, threonine 122, arginine 183, glutamine 192, glycine 212, and arginine 213; that span reads DLKFHDIPNT. Residue lysine 65 is the Proton donor of the active site.

This sequence belongs to the OMP decarboxylase family. Type 1 subfamily. As to quaternary structure, homodimer.

The enzyme catalyses orotidine 5'-phosphate + H(+) = UMP + CO2. The protein operates within pyrimidine metabolism; UMP biosynthesis via de novo pathway; UMP from orotate: step 2/2. Functionally, catalyzes the decarboxylation of orotidine 5'-monophosphate (OMP) to uridine 5'-monophosphate (UMP). This is Orotidine 5'-phosphate decarboxylase from Chromohalobacter salexigens (strain ATCC BAA-138 / DSM 3043 / CIP 106854 / NCIMB 13768 / 1H11).